Here is a 545-residue protein sequence, read N- to C-terminus: Tyrosine decarboxylase 2 (545 aa).

The segment covering 23-44 has biased composition (gly residues); the sequence is GYTNGNGHTNGNGNYNGNGHVN. A disordered region spans residues 23 to 45; the sequence is GYTNGNGHTNGNGNYNGNGHVNG. Residues His-245 and His-360 each contribute to the L-tyrosine site. An N6-(pyridoxal phosphate)lysine modification is found at Lys-361. Tyr-390 contributes to the L-tyrosine binding site.

This sequence belongs to the group II decarboxylase family. In terms of assembly, homotetramer. Requires pyridoxal 5'-phosphate as cofactor. As to expression, expressed specifically in flowers.

It is found in the cytoplasm. The enzyme catalyses L-tyrosine + H(+) = tyramine + CO2. Functionally, converts tyrosine into tyramine, a precursor of isoquinoline alkaloids and various amides. This Arabidopsis thaliana (Mouse-ear cress) protein is Tyrosine decarboxylase 2.